A 264-amino-acid chain; its full sequence is Phosphonoacetaldehyde hydrolase (264 aa).

The Nucleophile role is filled by Asp9. The Mg(2+) site is built by Asp9 and Ala11. The active-site Schiff-base intermediate with substrate is Lys50. Asp183 is a binding site for Mg(2+).

The protein belongs to the HAD-like hydrolase superfamily. PhnX family. As to quaternary structure, homodimer. Mg(2+) is required as a cofactor.

The enzyme catalyses phosphonoacetaldehyde + H2O = acetaldehyde + phosphate + H(+). Its function is as follows. Involved in phosphonate degradation. This chain is Phosphonoacetaldehyde hydrolase, found in Bacillus cereus (strain B4264).